We begin with the raw amino-acid sequence, 375 residues long: Lipid-A-disaccharide synthase (375 aa).

This sequence belongs to the LpxB family.

It catalyses the reaction a lipid X + a UDP-2-N,3-O-bis[(3R)-3-hydroxyacyl]-alpha-D-glucosamine = a lipid A disaccharide + UDP + H(+). It participates in bacterial outer membrane biogenesis; LPS lipid A biosynthesis. In terms of biological role, condensation of UDP-2,3-diacylglucosamine and 2,3-diacylglucosamine-1-phosphate to form lipid A disaccharide, a precursor of lipid A, a phosphorylated glycolipid that anchors the lipopolysaccharide to the outer membrane of the cell. In Pseudomonas putida (strain W619), this protein is Lipid-A-disaccharide synthase.